Here is a 553-residue protein sequence, read N- to C-terminus: Solute carrier family 22 member 12 (553 aa).

A helical membrane pass occupies residues 9–29 (LVGGLGRFQVLQTMALMVSIM). N-linked (GlcNAc...) asparagine glycans are attached at residues Asn-56 and Asn-102. Helical transmembrane passes span 146-166 (PMAQ…CGPA), 174-194 (LVLT…AFAP), 195-215 (AFPV…GVMM), 232-252 (LVMT…AAVA), 260-280 (LLQL…WWLA), 351-371 (CIST…ALDL), 378-398 (IFLL…GALL), 407-427 (PTLA…TLVP), 435-455 (SALA…ITIY), 466-486 (MTAV…GPLV), and 495-515 (WLPL…ALLL). Thr-542 is subject to Phosphothreonine.

It belongs to the major facilitator (TC 2.A.1) superfamily. Organic cation transporter (TC 2.A.1.19) family. In terms of assembly, interacts with PDZK1. In terms of processing, N-glycosylated. In terms of tissue distribution, detected in kidney (at protein level). Detected in fetal and adult kidney. Detected in epithelial cells of proximal tubules in renal cortex.

The protein resides in the apical cell membrane. The catalysed reaction is urate(out) + (S)-lactate(in) = urate(in) + (S)-lactate(out). It carries out the reaction nicotinate(in) + urate(out) = nicotinate(out) + urate(in). The enzyme catalyses urate(out) + n chloride(in) = urate(in) + n chloride(out). It catalyses the reaction orotate(out) + nicotinate(in) = orotate(in) + nicotinate(out). Electroneutral antiporter that translocates urate across the apical membrane of proximal tubular cells in exchange for monovalent organic or inorganic anions. Involved in renal reabsorption of urate and helps maintaining blood levels of uric acid. Mediates urate uptake by an exchange with organic anions such as (S)-lactate and nicotinate, and inorganic anion Cl(-). Other inorganic anions such as Br(-), I(-) and NO3(-) may also act as counteranions that exchange for urate. Also mediates orotate tubular uptake coupled with nicotinate efflux and to a lesser extent with lactate efflux, therefore displaying a potential role in orotate renal reabsorption. Orotate transport is Cl(-)-dependent. This is Solute carrier family 22 member 12 from Homo sapiens (Human).